Reading from the N-terminus, the 223-residue chain is HTH-type transcriptional dual regulator CecR (223 aa).

The HTH tetR-type domain occupies 11-70 (EQAKKQLIAAALAQFGEYGMNATTREIAAQAGQNIAAITYYFGSKEDLYLACAQWIADFI). The segment at residues 33-52 (TTREIAAQAGQNIAAITYYF) is a DNA-binding region (H-T-H motif).

The protein localises to the cytoplasm. Functionally, regulates transcription of the cecR-ybhGFSR operon and the rhlE gene, which altogether are involved in the control of sensitivity to cefoperazone and chloramphenicol. Represses the cecR-ybhGFSR operon and activates the rhlE operon. Acts by binding to a palindromic sequence within the intergenic spacer located between these two divergently transcribed operons. The chain is HTH-type transcriptional dual regulator CecR from Shigella flexneri.